The chain runs to 136 residues: MKKSNFSNVNLSMGTGRRKSSVARVYIREGSGNIKVNNRDFDSYIQLENLRTMALSPLVLTNTLGKYDLYINVYGGGISGQSGAIRHGISRALFKLDESNKMILRSNGFLTRDSRKVERKKFGQKKARKSFQFSKR.

The protein belongs to the universal ribosomal protein uS9 family.

The sequence is that of Small ribosomal subunit protein uS9 from Borreliella burgdorferi (strain ZS7) (Borrelia burgdorferi).